The primary structure comprises 120 residues: NADH-ubiquinone oxidoreductase chain 3 (120 aa).

3 consecutive transmembrane segments (helical) span residues 10-30, 62-82, and 89-109; these read ILILFFISLGLSIILFFLGYF, FYLVAILFLIFDLEITFLFPF, and MTLFSYSIMLIFLIILTIGFI.

This sequence belongs to the complex I subunit 3 family.

The protein localises to the mitochondrion membrane. The enzyme catalyses a ubiquinone + NADH + 5 H(+)(in) = a ubiquinol + NAD(+) + 4 H(+)(out). Functionally, core subunit of the mitochondrial membrane respiratory chain NADH dehydrogenase (Complex I) that is believed to belong to the minimal assembly required for catalysis. Complex I functions in the transfer of electrons from NADH to the respiratory chain. The immediate electron acceptor for the enzyme is believed to be ubiquinone. This Dictyostelium citrinum (Slime mold) protein is NADH-ubiquinone oxidoreductase chain 3 (nad3).